The sequence spans 62 residues: MRLHHLLLLLLLVVLSSGSGFTQGVRSYLSCWGNRGICLLNRCPGRMRQIGTCLAPRVKCCR.

The N-terminal stretch at 1 to 22 is a signal peptide; it reads MRLHHLLLLLLLVVLSSGSGFT. Gln23 bears the Pyrrolidone carboxylic acid mark. 3 cysteine pairs are disulfide-bonded: Cys31–Cys60, Cys38–Cys53, and Cys43–Cys61.

This sequence belongs to the beta-defensin family. In terms of tissue distribution, neutrophilic granules.

Its subcellular location is the secreted. Its function is as follows. Has bactericidal activity. Active against E.coli ML35 and S.aureus 502A. The chain is Beta-defensin 10 (DEFB10) from Bos taurus (Bovine).